A 548-amino-acid polypeptide reads, in one-letter code: Solute carrier family 22 member 7 (548 aa).

Helical transmembrane passes span 21 to 41 (VALL…PIFL), 146 to 166 (AAST…GYLS), 180 to 200 (VSTL…MFAI), 204 to 224 (LTGS…LEWL), 234 to 254 (VLSS…GYLI), 259 to 279 (WLLL…WWVP), 346 to 366 (ISLC…GLSL), 376 to 397 (YQTQ…YLSV), 404 to 423 (LTQA…RLLV), 432 to 452 (TVLA…AYLF), 466 to 486 (MGLT…AALL), and 493 to 513 (LPKL…LLLP). A disordered region spans residues 522–548 (ETIQDVERKSAPTSLQEEEMPMKQVQN).

The protein belongs to the major facilitator (TC 2.A.1) superfamily. Organic cation transporter (TC 2.A.1.19) family.

The protein localises to the basolateral cell membrane. The protein resides in the apical cell membrane. It localises to the cell membrane. It carries out the reaction orotate(out) + L-glutamate(in) = orotate(in) + L-glutamate(out). It catalyses the reaction 3',5'-cyclic GMP(in) = 3',5'-cyclic GMP(out). The catalysed reaction is GMP(in) = GMP(out). The enzyme catalyses 2'-deoxyguanosine(in) = 2'-deoxyguanosine(out). It carries out the reaction GDP(in) = GDP(out). It catalyses the reaction guanosine(in) = guanosine(out). The catalysed reaction is GTP(in) = GTP(out). The enzyme catalyses 3',5'-cyclic AMP(in) = 3',5'-cyclic AMP(out). It carries out the reaction creatinine(in) = creatinine(out). It catalyses the reaction prostaglandin E2(out) = prostaglandin E2(in). The catalysed reaction is 2-oxoglutarate(in) = 2-oxoglutarate(out). The enzyme catalyses glutarate(in) = glutarate(out). It carries out the reaction urate(out) = urate(in). It catalyses the reaction estrone 3-sulfate(out) = estrone 3-sulfate(in). Its function is as follows. Functions as a Na(+)-independent bidirectional multispecific transporter. Contributes to the renal and hepatic elimination of endogenous organic compounds from the systemic circulation into the urine and bile, respectively. Capable of transporting a wide range of purine and pyrimidine nucleobases, nucleosides and nucleotides, with cGMP, 2'deoxyguanosine and GMP being the preferred substrates. Functions as a pH- and chloride-independent cGMP bidirectional facilitative transporter that can regulate both intracellular and extracellular levels of cGMP and may be involved in cGMP signaling pathways. Mediates orotate/glutamate bidirectional exchange and most likely display a physiological role in hepatic release of glutamate into the blood. Involved in renal secretion and possible reabsorption of creatinine. Able to uptake prostaglandin E2 (PGE2) and may contribute to PGE2 renal excretion. Also transports alpha-ketoglutarate and urate. Apart from the orotate/glutamate exchange, the counterions for the uptake of other SLC22A7/OAT2 substrates remain to be identified. The sequence is that of Solute carrier family 22 member 7 (SLC22A7) from Pongo abelii (Sumatran orangutan).